Here is a 1198-residue protein sequence, read N- to C-terminus: DNA polymerase (1198 aa).

Disordered stretches follow at residues 1–90 (MALV…TVVA), 179–198 (LEQP…QPNP), and 906–931 (ALAD…PSGT). Residues 30 to 40 (QQPPRAAPAPA) are compositionally biased toward low complexity.

It belongs to the DNA polymerase type-B family. As to quaternary structure, heterodimer with the terminal protein; this heterodimer binds to bp 9 to 18 of the genome. Forms a complex with viral pTP, DBP and hosts NFIA and POU2F1/OCT1 for initiation of replication.

It localises to the host nucleus. The catalysed reaction is DNA(n) + a 2'-deoxyribonucleoside 5'-triphosphate = DNA(n+1) + diphosphate. Eukaryotic-type DNA polymerase involved in viral genomic replication. DNA synthesis is protein primed, and acts in a strand displacement replication. Assembles in complex with viral pTP, DBP, host NFIA and host POU2F1/OCT1 on viral origin of replication. The polymerase covalently transfers dCMP onto pTP, thereby initiating complementary strand synthesis. The protein is DNA polymerase of Homo sapiens (Human).